The following is a 230-amino-acid chain: UPF0173 metal-dependent hydrolase Dshi_2788 (230 aa).

This sequence belongs to the UPF0173 family.

The protein is UPF0173 metal-dependent hydrolase Dshi_2788 of Dinoroseobacter shibae (strain DSM 16493 / NCIMB 14021 / DFL 12).